Consider the following 225-residue polypeptide: Urease accessory protein UreG (225 aa).

The interval 1–21 (MHLDHHHESAAAVSADARRPD) is disordered. Residue 33–40 (GPVGSGKT) coordinates GTP.

The protein belongs to the SIMIBI class G3E GTPase family. UreG subfamily. Homodimer. UreD, UreF and UreG form a complex that acts as a GTP-hydrolysis-dependent molecular chaperone, activating the urease apoprotein by helping to assemble the nickel containing metallocenter of UreC. The UreE protein probably delivers the nickel.

The protein localises to the cytoplasm. Its function is as follows. Facilitates the functional incorporation of the urease nickel metallocenter. This process requires GTP hydrolysis, probably effectuated by UreG. This chain is Urease accessory protein UreG, found in Streptomyces coelicolor (strain ATCC BAA-471 / A3(2) / M145).